The following is a 681-amino-acid chain: RNA polymerase sigma factor RpoD (681 aa).

Disordered regions lie at residues Met1–Lys60 and Asp239–Lys270. The span at Glu261–Lys270 shows a compositional bias: basic and acidic residues. The segment at Met446–Thr516 is sigma-70 factor domain-2. Positions Asp470–Gln473 match the Interaction with polymerase core subunit RpoC motif. The interval Asp525 to His601 is sigma-70 factor domain-3. A sigma-70 factor domain-4 region spans residues Val614–Ser668. The H-T-H motif DNA-binding region spans Leu641–Ser660.

Belongs to the sigma-70 factor family. RpoD/SigA subfamily. As to quaternary structure, interacts transiently with the RNA polymerase catalytic core.

Its subcellular location is the cytoplasm. Its function is as follows. Sigma factors are initiation factors that promote the attachment of RNA polymerase to specific initiation sites and are then released. This sigma factor is the primary sigma factor during exponential growth. The polypeptide is RNA polymerase sigma factor RpoD (Helicobacter pylori (strain J99 / ATCC 700824) (Campylobacter pylori J99)).